Here is a 503-residue protein sequence, read N- to C-terminus: Probable cytosol aminopeptidase (503 aa).

Positions 274 and 279 each coordinate Mn(2+). Lys286 is a catalytic residue. Residues Asp297, Asp356, and Glu358 each coordinate Mn(2+). Residue Arg360 is part of the active site.

The protein belongs to the peptidase M17 family. Mn(2+) is required as a cofactor.

Its subcellular location is the cytoplasm. It carries out the reaction Release of an N-terminal amino acid, Xaa-|-Yaa-, in which Xaa is preferably Leu, but may be other amino acids including Pro although not Arg or Lys, and Yaa may be Pro. Amino acid amides and methyl esters are also readily hydrolyzed, but rates on arylamides are exceedingly low.. The enzyme catalyses Release of an N-terminal amino acid, preferentially leucine, but not glutamic or aspartic acids.. Its function is as follows. Presumably involved in the processing and regular turnover of intracellular proteins. Catalyzes the removal of unsubstituted N-terminal amino acids from various peptides. The protein is Probable cytosol aminopeptidase of Burkholderia mallei (strain SAVP1).